Here is a 269-residue protein sequence, read N- to C-terminus: [LysW]-aminoadipate kinase (269 aa).

ATP is bound at residue Lys-5 to Gly-8. Arg-64 lines the substrate pocket. Residue Tyr-78 participates in ATP binding. A substrate-binding site is contributed by Asn-168.

This sequence belongs to the acetylglutamate kinase family. LysZ subfamily.

The protein resides in the cytoplasm. The catalysed reaction is [amino-group carrier protein]-C-terminal-N-(1,4-dicarboxybutan-1-yl)-L-glutamine + ATP = [amino-group carrier protein]-C-terminal-N-(1-carboxy-5-phosphooxy-5-oxopentan-1-yl)-L-glutamine + ADP. It functions in the pathway amino-acid biosynthesis; L-lysine biosynthesis via AAA pathway; L-lysine from L-alpha-aminoadipate (Thermus route): step 2/5. Its function is as follows. Catalyzes the phosphorylation of LysW-gamma-alpha-aminoadipate. Does not phosphorylate N-acetyl-glutamate. The sequence is that of [LysW]-aminoadipate kinase from Thermus thermophilus (strain ATCC BAA-163 / DSM 7039 / HB27).